The sequence spans 138 residues: Ribulose bisphosphate carboxylase small subunit (138 aa).

This sequence belongs to the RuBisCO small chain family. As to quaternary structure, heterohexadecamer of 8 large and 8 small subunits.

It localises to the plastid. Its subcellular location is the chloroplast. In terms of biological role, ruBisCO catalyzes two reactions: the carboxylation of D-ribulose 1,5-bisphosphate, the primary event in carbon dioxide fixation, as well as the oxidative fragmentation of the pentose substrate in the photorespiration process. Both reactions occur simultaneously and in competition at the same active site. Although the small subunit is not catalytic it is essential for maximal activity. This chain is Ribulose bisphosphate carboxylase small subunit, found in Pyropia haitanensis (Red seaweed).